The primary structure comprises 443 residues: Glutamyl-tRNA reductase (443 aa).

Substrate is bound by residues threonine 55 to arginine 58, serine 113, glutamate 118 to glutamine 120, and glutamine 124. The Nucleophile role is filled by cysteine 56. Residue glycine 193 to isoleucine 198 participates in NADP(+) binding.

Belongs to the glutamyl-tRNA reductase family. In terms of assembly, homodimer.

The catalysed reaction is (S)-4-amino-5-oxopentanoate + tRNA(Glu) + NADP(+) = L-glutamyl-tRNA(Glu) + NADPH + H(+). It participates in porphyrin-containing compound metabolism; protoporphyrin-IX biosynthesis; 5-aminolevulinate from L-glutamyl-tRNA(Glu): step 1/2. Its pathway is porphyrin-containing compound metabolism; chlorophyll biosynthesis. Catalyzes the NADPH-dependent reduction of glutamyl-tRNA(Glu) to glutamate 1-semialdehyde (GSA). The sequence is that of Glutamyl-tRNA reductase from Methylibium petroleiphilum (strain ATCC BAA-1232 / LMG 22953 / PM1).